The chain runs to 1107 residues: Integrator complex subunit 6 homolog (1107 aa).

The region spanning 2–195 (LITFVVDTSG…LPMEPAIAPM (194 aa)) is the VWFA domain. 5 disordered regions span residues 454–515 (RIIN…SGNL), 542–572 (DNET…SSNI), 629–801 (TLRD…VSSP), 818–861 (QISS…IVNN), and 946–1034 (VVRP…TTPN). 2 stretches are compositionally biased toward low complexity: residues 460 to 513 (QQQQ…SGSG) and 546 to 562 (SENS…STTG). The segment covering 629–639 (TLRDIDDDKKP) has biased composition (basic and acidic residues). Residues 693–801 (PSLPTLNSLS…PIPSTTVSSP (109 aa)) are compositionally biased toward low complexity. A compositionally biased stretch (pro residues) spans 846–857 (SPPPPPPPPPLP). Residues 956 to 975 (PLTIDTLTSSSSSSTIPTTT) are compositionally biased toward low complexity. Over residues 976-996 (NGSLSTHDTPNTSPTLSSINY) the composition is skewed to polar residues. A compositionally biased stretch (low complexity) spans 997 to 1034 (NNNNNNNNNNNNNNNNNNNNNNNNNNRKNSIITTTTPN). One can recognise an MIF4G domain in the interval 1041–1103 (IKFVHKEIRR…SLISKLIGYI (63 aa)).

The protein belongs to the Integrator subunit 6 family. Component of the Integrator complex. The core complex associates with protein phosphatase 2A subunits, to form the Integrator-PP2A (INTAC) complex.

Its subcellular location is the nucleus. It localises to the chromosome. Its function is as follows. Component of the integrator complex, a multiprotein complex that terminates RNA polymerase II (Pol II) transcription in the promoter-proximal region of genes. The integrator complex provides a quality checkpoint during transcription elongation by driving premature transcription termination of transcripts that are unfavorably configured for transcriptional elongation: the complex terminates transcription by (1) catalyzing dephosphorylation of the C-terminal domain (CTD) of Pol II subunit polr2a, (2) degrading the exiting nascent RNA transcript via endonuclease activity and (3) promoting the release of Pol II from bound DNA. The integrator complex is also involved in terminating the synthesis of non-coding Pol II transcripts, such as enhancer RNAs (eRNAs), small nuclear RNAs (snRNAs), telomerase RNAs and long non-coding RNAs (lncRNAs). Within the integrator complex, INTS6 acts as a molecular adapter that promotes assembly of protein phosphatase 2A (PP2A) subunits to the integrator core complex, promoting recruitment of PP2A to transcription pause-release checkpoint. This is Integrator complex subunit 6 homolog (ints6) from Dictyostelium discoideum (Social amoeba).